Reading from the N-terminus, the 302-residue chain is MSVVSSVTVKVPGTTANLGPGFDCIGAALTIYNQFQFTRLETSELIIQATGAEAERVPTDESNLLYQAFVKLYQYIDQTPPGVKVEIELGVPLARGLGSSATAIVGGLVAANRLAGEPLSQAQVMELAIAIEGHPDNVVPALVGGCRLAATGAMGWEICDVPWHGDIVPVLAIPDFELSTSEARRVLPTEYSRADAIFNTAHLGLLLRGLQTGKGEWLRAALQDKLHQPYRQALIPGYDAVNTAAVAAGAYGMVISGAGPTLLALADVSHAAAVAAAMSTAWREAGIKAVVRSLALDTHGAT.

ATP is bound at residue 92–102; sequence PLARGLGSSAT.

This sequence belongs to the GHMP kinase family. Homoserine kinase subfamily.

It localises to the cytoplasm. It catalyses the reaction L-homoserine + ATP = O-phospho-L-homoserine + ADP + H(+). The protein operates within amino-acid biosynthesis; L-threonine biosynthesis; L-threonine from L-aspartate: step 4/5. Catalyzes the ATP-dependent phosphorylation of L-homoserine to L-homoserine phosphate. This chain is Homoserine kinase, found in Trichormus variabilis (strain ATCC 29413 / PCC 7937) (Anabaena variabilis).